The following is a 73-amino-acid chain: MKSEIKKNDMVKVIAGDDKGKVAKVLAVLPKTSQVIVEGCKVVKKAIKPTDDNPKGGFIHKEKPMHISNVKKA.

The segment covering 51 to 65 has biased composition (basic and acidic residues); sequence DDNPKGGFIHKEKPM. Residues 51 to 73 are disordered; the sequence is DDNPKGGFIHKEKPMHISNVKKA.

Belongs to the universal ribosomal protein uL24 family. Part of the 50S ribosomal subunit.

Its function is as follows. One of two assembly initiator proteins, it binds directly to the 5'-end of the 23S rRNA, where it nucleates assembly of the 50S subunit. In terms of biological role, one of the proteins that surrounds the polypeptide exit tunnel on the outside of the subunit. The sequence is that of Large ribosomal subunit protein uL24 from Helicobacter acinonychis (strain Sheeba).